The sequence spans 298 residues: uncharacterized protein (298 aa).

10 helical membrane-spanning segments follow: residues 9-28 (GYVL…LYFK), 38-60 (IIVQ…WKHP), 72-94 (RFVV…VWAV), 104-121 (LGYY…MLLL), 128-145 (LQWL…QQVW), 150-167 (LPWV…YGLI), 174-196 (AALP…WLLF), 211-233 (PEAL…FNAA), 240-262 (ATLG…LLFG), and 272-291 (AFAF…WRSL). The EamA domain maps to 18–141 (VIWGLFPLYF…AVALASLGVA (124 aa)).

The protein belongs to the EamA transporter family.

The protein resides in the cell membrane. This is an uncharacterized protein from Pseudomonas aeruginosa (strain ATCC 15692 / DSM 22644 / CIP 104116 / JCM 14847 / LMG 12228 / 1C / PRS 101 / PAO1).